The chain runs to 227 residues: RNA-free ribonuclease P (227 aa).

It belongs to the HARP family.

The catalysed reaction is Endonucleolytic cleavage of RNA, removing 5'-extranucleotides from tRNA precursor.. In terms of biological role, RNA-free RNase P that catalyzes the removal of the 5'-leader sequence from pre-tRNA to produce the mature 5'-terminus. The polypeptide is RNA-free ribonuclease P (Archaeoglobus fulgidus (strain ATCC 49558 / DSM 4304 / JCM 9628 / NBRC 100126 / VC-16)).